The primary structure comprises 549 residues: MKNINPTHTQAWKSLEAHKAELSNTTIQDLFKQEKNRFDDYSLTFNNQILVDFSKNNINQTTLSHLRQLAQECALDSAKEAMFTGEKINRTENRAVLHTALRNRTNTPVLVDGKDVMPEVNAVLAKMKDFCQRIISGEWKGYTGKAITDVVNIGIGGSDLGPYMVTEALRPYKNHLNMHFVSNVDGTHIAETLKKVNPETTLFLVASKTFTTQETMTNAQSARDWLLKAAKDESAVAKHFAALSTNAKDVEKFGIDTNNMFEFWDWVGGRYSLWSAIGLSIALSIGFENFEALLNGAHEMDKHFRSAPIEQNIPTTLALVGLWNTNFLGAQTEAILPYDQYLHRFAAYFQQGNMESNGKYVDRDGNVINNYQTGPIIWGEPGTNGQHAFYQLIHQGTTLIPCDFIAPAQTHNPLADHHNKLLSNFFAQTEALAFGKTKEEVEAEFIKAGKSLDDVKNIVPFKVFTGNKPTNSILVQKITPFTLGALIAMYEHKIFVQGVIFNIFSFDQWGVELGKQLANRILPELTDSEKVASHDSSTNGLINQFKAWR.

The Proton donor role is filled by Glu-355. Active-site residues include His-387 and Lys-515.

This sequence belongs to the GPI family.

Its subcellular location is the cytoplasm. The catalysed reaction is alpha-D-glucose 6-phosphate = beta-D-fructose 6-phosphate. The protein operates within carbohydrate biosynthesis; gluconeogenesis. It participates in carbohydrate degradation; glycolysis; D-glyceraldehyde 3-phosphate and glycerone phosphate from D-glucose: step 2/4. In terms of biological role, catalyzes the reversible isomerization of glucose-6-phosphate to fructose-6-phosphate. This is Glucose-6-phosphate isomerase from Haemophilus influenzae (strain PittEE).